The sequence spans 623 residues: Set1/Ash2 histone methyltransferase complex subunit ASH2 (623 aa).

A compositionally biased stretch (gly residues) spans 1-18; that stretch reads MAAAGAGPGPGVSAGPGP. The PHD-type; atypical zinc-finger motif lies at 1-62; sequence MAAAGAGPGP…SGEAESGDAN (62 aa). A disordered region spans residues 1-99; that stretch reads MAAAGAGPGP…MDTQAGSVDE (99 aa). Over residues 36–56 the composition is skewed to low complexity; the sequence is AAGAGEGPSAAPGAEPSSGEA. Residues 63–172 are DNA-binding; that stretch reads LVDVSGLETE…MCLSALANLT (110 aa). Residues 84 to 95 show a composition bias toward polar residues; the sequence is GDTSEVMDTQAG. S96 carries the post-translational modification Phosphoserine. A C4-type zinc finger spans residues 112–145; it reads CGICTKWFTADTFGIDTSSCLPFMTNYSFHCNVC. Over residues 230 to 247 the composition is skewed to basic and acidic residues; it reads LVKEHPDPGSKDPEEDYP. The segment at 230–326 is disordered; the sequence is LVKEHPDPGS…AQRLPPHGYP (97 aa). The segment covering 265-277 has biased composition (polar residues); the sequence is NQKQSSAVSASGN. The span at 278–290 shows a compositional bias: gly residues; sequence LNGGIAAGSSGKG. R291 is subject to Asymmetric dimethylarginine; by PRMT1 and PRMT5. Phosphoserine is present on S311. Positions 311–623 are interaction with RBBP5; the sequence is SDPLFSAQRL…DGRRSPPWEP (313 aa). The B30.2/SPRY domain occupies 355 to 578; it reads LDCWAGKPIP…VSINFGPSFK (224 aa).

As to quaternary structure, interacts with HCFC1. Core component of several methyltransferase-containing complexes including MLL1/MLL, MLL2/3 (also named ASCOM complex) and MLL4/WBP7. Each complex is at least composed of ASH2L, RBBP5, WDR5, DPY30, one or more specific histone methyltransferases (KMT2A/MLL1, KMT2D/MLL2, KMT2C/MLL3 and KMT2B/MLL4), and the facultative components PAGR1, BACC1, CHD8, E2F6, HCFC1, HCFC2, HSP70, INO80C, KDM6A, KANSL1, LAS1L, MAX, MCRS1, MEN1, MGA, KAT8/MOF, NCOA6, PAXIP1/PTIP, PELP1, PHF20, PRP31, RING2, RUVB1/TIP49A, RUVB2/TIP49B, SENP3, TAF1, TAF4, TAF6, TAF7, TAF9, TEX10 and alpha- and beta-tubulin. Component of the SET1 complex, at least composed of the catalytic subunit (SETD1A or SETD1B), WDR5, WDR82, RBBP5, ASH2L/ASH2, CXXC1/CFP1, HCFC1 and DPY30. Found in a complex with RBBP5, ASH2L, DPY30, KMT2A, KMT2D and WDR5. Component of a histone methylation complex composed of at least ZNF335, RBBP5, ASH2L and WDR5; the complex may have histone H3-specific methyltransferase activity, however does not have specificity for 'Lys-4' of histone H3. Within the complex, interacts with ZNF335. Interacts with RBBP5. Components of this complex may associate with components of a nuclear receptor-mediated transcription complex to form a complex at least composed of ZNF335, HCFC1, CCAR2, EMSY, MKI67, RBBP5, ASH2L and WDR5. Within this complex also interacts with CCAR2 and EMSY. Interacts with DPY30. Interacts with SETD1A and SETD1B. Both monomethylated and dimethylated on arginine residues in the C-terminus. Arg-291 is the major site. Methylation is not required for nuclear localization, nor for MLL complex integrity or maintenance of global histone H3K4me3 levels. As to expression, ubiquitously expressed, with abundant expression in the heart, skeletal muscle and kidney. Low expression is seen in spleen, lung and testis.

The protein resides in the nucleus. Transcriptional regulator. Component or associated component of some histone methyltransferase complexes which regulates transcription through recruitment of those complexes to gene promoters. Component of the Set1/Ash2 histone methyltransferase (HMT) complex, a complex that specifically methylates 'Lys-4' of histone H3, but not if the neighboring 'Lys-9' residue is already methylated. As part of the MLL1/MLL complex it is involved in methylation and dimethylation at 'Lys-4' of histone H3. May play a role in hematopoiesis. In association with RBBP5 and WDR5, stimulates the histone methyltransferase activities of KMT2A, KMT2B, KMT2C, KMT2D, SETD1A and SETD1B. The protein is Set1/Ash2 histone methyltransferase complex subunit ASH2 (Ash2l) of Mus musculus (Mouse).